The sequence spans 412 residues: Aspartate kinase Ask_LysC (412 aa).

The ACT domain maps to 265–332 (LTIRGVPDTP…QGIAAEMGAR (68 aa)).

This sequence belongs to the aspartokinase family.

The protein resides in the cytoplasm. The catalysed reaction is L-aspartate + ATP = 4-phospho-L-aspartate + ADP. It participates in amino-acid biosynthesis; L-lysine biosynthesis via DAP pathway; (S)-tetrahydrodipicolinate from L-aspartate: step 1/4. It functions in the pathway amino-acid biosynthesis; L-methionine biosynthesis via de novo pathway; L-homoserine from L-aspartate: step 1/3. The protein operates within amino-acid biosynthesis; L-threonine biosynthesis; L-threonine from L-aspartate: step 1/5. With respect to regulation, allosterically and strongly feedback inhibited by tryptophan. Addition of lysine alone slightly enhances activity. The simultaneous addition of lysine and tryptophan leads to very strong feedback inhibition of the enzyme. The feedback control by tryptophan is reduced in the presence of the compatible solutes hydroxyectoine or ectoine. Involved in the biosynthesis of L-aspartate-beta-semialdehyde which is a central intermediate in the biosynthesis of different amino acids (L-lysine, L-methionine, L-threonine). Catalyzes the phosphorylation of the beta-carboxyl group of L-aspartate to yield 4-phospho-L-aspartate. The sequence is that of Aspartate kinase Ask_LysC (lysC) from Stutzerimonas stutzeri (strain A1501) (Pseudomonas stutzeri).